The chain runs to 214 residues: Ras-related protein RABH1c (214 aa).

16–23 (GDQSVGKT) provides a ligand contact to GTP. The Effector region motif lies at 38 to 46 (YQPTIGIDF). GTP-binding positions include 64 to 68 (DTAGQ), 123 to 126 (NKTD), and 153 to 154 (SA). Residues 194 to 214 (TSNSSQGEQQGGAGGGGGCSC) form a disordered region. Residues 202–214 (QQGGAGGGGGCSC) show a composition bias toward gly residues. S-geranylgeranyl cysteine attachment occurs at residues cysteine 212 and cysteine 214. A Cysteine methyl ester modification is found at cysteine 214.

This sequence belongs to the small GTPase superfamily. Rab family. As to quaternary structure, interacts with the C-terminus of GC5, but not with GC3.

It is found in the golgi apparatus membrane. The protein localises to the cytoplasm. The protein resides in the cytosol. Functionally, protein transport. Regulator of membrane traffic from the Golgi apparatus towards the endoplasmic reticulum (ER). In Arabidopsis thaliana (Mouse-ear cress), this protein is Ras-related protein RABH1c (RABH1C).